The sequence spans 500 residues: Serine carboxypeptidase 3 (500 aa).

Residues 1–21 (MATARVSLILLVVVLAASACA) form the signal peptide. Positions 22 to 73 (EGLRLPRDAKFPAAQAERLIRSLNLLPKEAGPTGAGDVPSVAPGELLERRVT) are excised as a propeptide. Cystine bridges form between Cys126–Cys366, Cys294–Cys309, and Cys332–Cys337. Asn144 is a glycosylation site (N-linked (GlcNAc...) asparagine). Ser216 is an active-site residue. Asp404 is an active-site residue. Cys407 provides a ligand contact to substrate. Residue His461 is part of the active site. A propeptide spanning residues 485–500 (EEWLAELPEQPMYAAM) is cleaved from the precursor.

This sequence belongs to the peptidase S10 family. In terms of assembly, monomer.

It catalyses the reaction Release of a C-terminal amino acid with broad specificity.. The sequence is that of Serine carboxypeptidase 3 (CBP3) from Oryza sativa subsp. japonica (Rice).